The following is a 76-amino-acid chain: Exodeoxyribonuclease 7 small subunit (76 aa).

Belongs to the XseB family. As to quaternary structure, heterooligomer composed of large and small subunits.

Its subcellular location is the cytoplasm. The enzyme catalyses Exonucleolytic cleavage in either 5'- to 3'- or 3'- to 5'-direction to yield nucleoside 5'-phosphates.. Bidirectionally degrades single-stranded DNA into large acid-insoluble oligonucleotides, which are then degraded further into small acid-soluble oligonucleotides. This is Exodeoxyribonuclease 7 small subunit from Geobacter metallireducens (strain ATCC 53774 / DSM 7210 / GS-15).